A 403-amino-acid polypeptide reads, in one-letter code: Tryptophan synthase beta chain (403 aa).

Lys88 bears the N6-(pyridoxal phosphate)lysine mark.

The protein belongs to the TrpB family. As to quaternary structure, tetramer of two alpha and two beta chains. The cofactor is pyridoxal 5'-phosphate.

It catalyses the reaction (1S,2R)-1-C-(indol-3-yl)glycerol 3-phosphate + L-serine = D-glyceraldehyde 3-phosphate + L-tryptophan + H2O. It participates in amino-acid biosynthesis; L-tryptophan biosynthesis; L-tryptophan from chorismate: step 5/5. The beta subunit is responsible for the synthesis of L-tryptophan from indole and L-serine. This Shewanella frigidimarina (strain NCIMB 400) protein is Tryptophan synthase beta chain.